Reading from the N-terminus, the 606-residue chain is Serine/threonine-protein kinase A-Raf (606 aa).

The 73-residue stretch at 19-91 (GTVKVYLPNK…DGEELIVEVL (73 aa)) folds into the RBD domain. The segment at 98-144 (MHNFVRKTFFSLAFCDFCLKFLFHGFRCQTCGYKFHQHCSSKVPTVC) adopts a Phorbol-ester/DAG-type zinc-finger fold. Residues His-99, Cys-112, Cys-115, Cys-125, Cys-128, His-133, Cys-136, and Cys-144 each coordinate Zn(2+). Phosphoserine is present on residues Ser-157 and Ser-162. The disordered stretch occupies residues 160–207 (DLSGGSRQHEAPSNRPLNELLTPQGPSPRTQHCDPEHFPFPAPANAPL). Thr-181 carries the phosphothreonine modification. 2 positions are modified to phosphoserine: Ser-186 and Ser-214. The interval 240 to 290 (STDAAGSRGGSDGTPRGSPSPASVSSGRKSPHSKSPAEQRERKSLADDKKK) is disordered. Thr-253 is subject to Phosphothreonine. Residues Ser-257 and Ser-269 each carry the phosphoserine modification. Residues 274–289 (SPAEQRERKSLADDKK) show a composition bias toward basic and acidic residues. The Protein kinase domain occupies 310–570 (VQLLKRIGTG…PQILATIELL (261 aa)). ATP-binding positions include 316–324 (IGTGSFGTV) and Lys-336. Thr-318 carries the post-translational modification Phosphothreonine. The active-site Proton acceptor is Asp-429.

It belongs to the protein kinase superfamily. TKL Ser/Thr protein kinase family. RAF subfamily. As to quaternary structure, interacts with TH1L/NELFD. Requires Zn(2+) as cofactor. Dephosphorylation of Ser-214 by the SHOC2-MRAS-PP1c (SMP) complex consisting of SHOC2, GTP-bound M-Ras/MRAS and the catalytic subunit of protein phosphatase 1 (PPP1CA, PPP1CB or PPP1CC); this relieves inactivation and stimulates kinase activity. As to expression, predominantly in urogenital tissues.

It carries out the reaction L-seryl-[protein] + ATP = O-phospho-L-seryl-[protein] + ADP + H(+). It catalyses the reaction L-threonyl-[protein] + ATP = O-phospho-L-threonyl-[protein] + ADP + H(+). Involved in the transduction of mitogenic signals from the cell membrane to the nucleus. May also regulate the TOR signaling cascade. Phosphorylates PFKFB2. In terms of biological role, serves as a positive regulator of myogenic differentiation by inducing cell cycle arrest, the expression of myogenin and other muscle-specific proteins, and myotube formation. The sequence is that of Serine/threonine-protein kinase A-Raf (ARAF) from Homo sapiens (Human).